The chain runs to 632 residues: ATP-dependent zinc metalloprotease FtsH (632 aa).

Residues 1-9 lie on the Cytoplasmic side of the membrane; the sequence is MKPTNEPKK. The chain crosses the membrane as a helical span at residues 10–30; the sequence is PFFQSPIVLAVLGGILLIFFL. The Periplasmic portion of the chain corresponds to 31–116; sequence RSFNSDGSFS…INYSGFSESN (86 aa). A helical transmembrane segment spans residues 117–137; sequence FFTDMLGWLMPILVILGLWMF. Residues 138–632 are Cytoplasmic-facing; sequence MANRMQKNMG…RLIPLEEQAS (495 aa). 210–217 contributes to the ATP binding site; sequence GPPGTGKT. His434 contributes to the Zn(2+) binding site. Glu435 is an active-site residue. Zn(2+) is bound by residues His438 and Asp511.

This sequence in the central section; belongs to the AAA ATPase family. The protein in the C-terminal section; belongs to the peptidase M41 family. Homohexamer. Zn(2+) serves as cofactor.

It localises to the cell inner membrane. Its function is as follows. Acts as a processive, ATP-dependent zinc metallopeptidase for both cytoplasmic and membrane proteins. Plays a role in the quality control of integral membrane proteins. The polypeptide is ATP-dependent zinc metalloprotease FtsH (Helicobacter pylori (strain J99 / ATCC 700824) (Campylobacter pylori J99)).